The sequence spans 440 residues: MESQQLSNYPHISHGSACASVTSKEVHTNQDPLDVSASKIQEYDKASTKANSQQTTTPASSAVPENPHHASPQPASVPPPQNGPYPQQCMMTQNQANPSGWSFYGHPSMIPYTPYQMSPMYFPPGPQSQFPQYPSSVGTPLSTPSPESGNTFTDSSSADSDMTSTKKYVRPPPMLTSPNDFPNWVKTYIKFLQNSNLGGIIPTVNGKPVRQITDDELTFLYNTFQIFAPSQFLPTWVKDILSVDYTDIMKILSKSIEKMQSDTQEANDIVTLANLQYNGSTPADAFETKVTNIIDRLNNNGIHINNKVACQLIMRGLSGEYKFLRYTRHRHLNMTVAELFLDIHAIYEEQQGSRNSKPNYRRNRSDEKNDSRSYTNTTKPKVIARNPQKTNNSKSKTARAHNVSTSINSPSTDNDSISKSTTEPIQLNNKHDLHLRPETY.

3 stretches are compositionally biased toward polar residues: residues 1 to 10 (MESQQLSNYP), 48 to 60 (TKANSQQTTTPAS), and 127 to 152 (QSQFPQYPSSVGTPLSTPSPESGNTF). Disordered regions lie at residues 1 to 93 (MESQ…MMTQ), 126 to 173 (PQSQ…RPPP), and 352 to 440 (GSRN…PETY). Over residues 153–165 (TDSSSADSDMTST) the composition is skewed to low complexity. Residues 299 to 401 (NNGIHINNKV…NSKSKTARAH (103 aa)) form an RNA-binding region. The span at 402–428 (NVSTSINSPSTDNDSISKSTTEPIQLN) shows a compositional bias: polar residues. A Phosphoserine modification is found at S416. Positions 429–440 (NKHDLHLRPETY) are enriched in basic and acidic residues.

Homotrimer.

It localises to the cytoplasm. Capsid protein (CA) is the structural component of the virus-like particle (VLP), forming the shell that encapsulates the retrotransposons dimeric RNA genome. The particles are assembled from trimer-clustered units and there are holes in the capsid shells that allow for the diffusion of macromolecules. CA also has nucleocapsid-like chaperone activity, promoting primer tRNA(i)-Met annealing to the multipartite primer-binding site (PBS), dimerization of Ty1 RNA and initiation of reverse transcription. This is Transposon Ty1-DR3 Gag polyprotein (TY1A-DR3) from Saccharomyces cerevisiae (strain ATCC 204508 / S288c) (Baker's yeast).